The primary structure comprises 298 residues: GTPase Era (298 aa).

Positions 3–170 (KSGFVTIVGR…VELMKKAMPE (168 aa)) constitute an Era-type G domain. Residues 11–18 (GRPNVGKS) are G1. 11-18 (GRPNVGKS) provides a ligand contact to GTP. A G2 region spans residues 37–41 (QTTRN). The G3 stretch occupies residues 58 to 61 (DTPG). Residues 58–62 (DTPGI) and 120–123 (NKVD) each bind GTP. A G4 region spans residues 120-123 (NKVD). Positions 149–151 (ISA) are G5. Residues 201–278 (LRDEVPHGIA…NLKIWVKVRK (78 aa)) form the KH type-2 domain.

The protein belongs to the TRAFAC class TrmE-Era-EngA-EngB-Septin-like GTPase superfamily. Era GTPase family. As to quaternary structure, monomer.

The protein localises to the cytoplasm. It localises to the cell membrane. Its function is as follows. An essential GTPase that binds both GDP and GTP, with rapid nucleotide exchange. Plays a role in 16S rRNA processing and 30S ribosomal subunit biogenesis and possibly also in cell cycle regulation and energy metabolism. This Clostridium beijerinckii (strain ATCC 51743 / NCIMB 8052) (Clostridium acetobutylicum) protein is GTPase Era.